A 231-amino-acid chain; its full sequence is Aquaporin Z (231 aa).

The next 2 helical transmembrane spans lie at 11–31 (FLGT…AAAF) and 36–56 (IGLL…AFAI). Residues 65–67 (NPA) carry the NPA 1 motif. The next 3 helical transmembrane spans lie at 84-104 (LPYI…LYLI), 132-152 (MISV…VILG), and 161-181 (GFAP…SIPI). The short motif at 187 to 189 (NPA) is the NPA 2 element. Residues 203–223 (VSQLWLFWAAPIIGAILAGVI) form a helical membrane-spanning segment.

Belongs to the MIP/aquaporin (TC 1.A.8) family. In terms of assembly, homotetramer.

Its subcellular location is the cell inner membrane. It catalyses the reaction H2O(in) = H2O(out). Its function is as follows. Channel that permits osmotically driven movement of water in both directions. It is involved in the osmoregulation and in the maintenance of cell turgor during volume expansion in rapidly growing cells. It mediates rapid entry or exit of water in response to abrupt changes in osmolarity. In Shewanella oneidensis (strain ATCC 700550 / JCM 31522 / CIP 106686 / LMG 19005 / NCIMB 14063 / MR-1), this protein is Aquaporin Z.